A 314-amino-acid chain; its full sequence is tRNA dimethylallyltransferase (314 aa).

Positions 1–24 are disordered; that stretch reads MAEEPQRSPAPTSPFAFTVPSNPL. 40–47 is a binding site for ATP; the sequence is GPTASGKS. Residue 42-47 participates in substrate binding; sequence TASGKS.

It belongs to the IPP transferase family. In terms of assembly, monomer. Mg(2+) is required as a cofactor.

The enzyme catalyses adenosine(37) in tRNA + dimethylallyl diphosphate = N(6)-dimethylallyladenosine(37) in tRNA + diphosphate. Functionally, catalyzes the transfer of a dimethylallyl group onto the adenine at position 37 in tRNAs that read codons beginning with uridine, leading to the formation of N6-(dimethylallyl)adenosine (i(6)A). This Cereibacter sphaeroides (strain ATCC 17029 / ATH 2.4.9) (Rhodobacter sphaeroides) protein is tRNA dimethylallyltransferase.